A 516-amino-acid chain; its full sequence is Maturase K (516 aa).

It belongs to the intron maturase 2 family. MatK subfamily.

The protein localises to the plastid. The protein resides in the chloroplast. Its function is as follows. Usually encoded in the trnK tRNA gene intron. Probably assists in splicing its own and other chloroplast group II introns. The polypeptide is Maturase K (Disporum sessile (Japanese fairy bells)).